Here is a 264-residue protein sequence, read N- to C-terminus: S-adenosylmethionine decarboxylase proenzyme (264 aa).

Ser-112 (schiff-base intermediate with substrate; via pyruvic acid) is an active-site residue. A Pyruvic acid (Ser); by autocatalysis modification is found at Ser-112. The active-site Proton acceptor; for processing activity is the His-117. Cys-140 (proton donor; for catalytic activity) is an active-site residue.

The protein belongs to the prokaryotic AdoMetDC family. Type 2 subfamily. As to quaternary structure, heterooctamer of four alpha and four beta chains arranged as a tetramer of alpha/beta heterodimers. Requires pyruvate as cofactor. Post-translationally, is synthesized initially as an inactive proenzyme. Formation of the active enzyme involves a self-maturation process in which the active site pyruvoyl group is generated from an internal serine residue via an autocatalytic post-translational modification. Two non-identical subunits are generated from the proenzyme in this reaction, and the pyruvate is formed at the N-terminus of the alpha chain, which is derived from the carboxyl end of the proenzyme. The post-translation cleavage follows an unusual pathway, termed non-hydrolytic serinolysis, in which the side chain hydroxyl group of the serine supplies its oxygen atom to form the C-terminus of the beta chain, while the remainder of the serine residue undergoes an oxidative deamination to produce ammonia and the pyruvoyl group blocking the N-terminus of the alpha chain.

It carries out the reaction S-adenosyl-L-methionine + H(+) = S-adenosyl 3-(methylsulfanyl)propylamine + CO2. It functions in the pathway amine and polyamine biosynthesis; S-adenosylmethioninamine biosynthesis; S-adenosylmethioninamine from S-adenosyl-L-methionine: step 1/1. Its function is as follows. Catalyzes the decarboxylation of S-adenosylmethionine to S-adenosylmethioninamine (dcAdoMet), the propylamine donor required for the synthesis of the polyamines spermine and spermidine from the diamine putrescine. This Yersinia enterocolitica serotype O:8 / biotype 1B (strain NCTC 13174 / 8081) protein is S-adenosylmethionine decarboxylase proenzyme.